Reading from the N-terminus, the 196-residue chain is Nucleoid occlusion factor SlmA (196 aa).

Residues 6–66 (RNRREEILQA…GLIEFVEDTL (61 aa)) enclose the HTH tetR-type domain. Residues 29 to 48 (TTAKLAANLGVSEAALYRHF) constitute a DNA-binding region (H-T-H motif). The stretch at 108-135 (DALMGEHDRLRGRMEDLFNRIESSIKQI) forms a coiled coil.

Belongs to the nucleoid occlusion factor SlmA family. In terms of assembly, homodimer. Interacts with FtsZ.

Its subcellular location is the cytoplasm. It is found in the nucleoid. Required for nucleoid occlusion (NO) phenomenon, which prevents Z-ring formation and cell division over the nucleoid. Acts as a DNA-associated cell division inhibitor that binds simultaneously chromosomal DNA and FtsZ, and disrupts the assembly of FtsZ polymers. SlmA-DNA-binding sequences (SBS) are dispersed on non-Ter regions of the chromosome, preventing FtsZ polymerization at these regions. The chain is Nucleoid occlusion factor SlmA from Idiomarina loihiensis (strain ATCC BAA-735 / DSM 15497 / L2-TR).